The chain runs to 185 residues: 4-nitrophenol 4-monooxygenase/4-nitrocatechol 2-monooxygenase, reductase component (185 aa).

It belongs to the non-flavoprotein flavin reductase family. In terms of assembly, the 4-NP/4-NCA monooxygenase is composed of an oxygenase component NpcA and a reductase component NpcB.

It carries out the reaction 4-nitrophenol + NADH + O2 + H(+) = 4-nitrocatechol + NAD(+) + H2O. The catalysed reaction is 4-nitrocatechol + NADPH + O2 = 2-hydroxy-1,4-benzoquinone + nitrite + NADP(+) + H2O. It catalyses the reaction 4-nitrocatechol + NADH + O2 = 2-hydroxy-1,4-benzoquinone + nitrite + NAD(+) + H2O. The protein operates within aromatic compound metabolism. Its pathway is xenobiotic degradation. With respect to regulation, inhibited by methimazole. Functionally, involved in the degradation of para-nitrophenol (4-NP). Catalyzes both the initial hydroxylation of 4-NP to produce 4-nitrocatechol (4-NCA) and the subsequent oxidative release of the nitro group from 4-NCA to produce 2-hydroxy-1,4-benzoquinone. It can also use 4-nitroresorcinol as substrate with a rate of nitrite release similar to that observed with the two physiological substrates, 4-PN and 4-NCA. This is 4-nitrophenol 4-monooxygenase/4-nitrocatechol 2-monooxygenase, reductase component (npcB) from Rhodococcus opacus (Nocardia opaca).